The chain runs to 202 residues: ATP-dependent Clp protease proteolytic subunit (202 aa).

Serine 106 serves as the catalytic Nucleophile. Residue histidine 131 is part of the active site.

It belongs to the peptidase S14 family. Fourteen ClpP subunits assemble into 2 heptameric rings which stack back to back to give a disk-like structure with a central cavity, resembling the structure of eukaryotic proteasomes.

The protein localises to the cytoplasm. It catalyses the reaction Hydrolysis of proteins to small peptides in the presence of ATP and magnesium. alpha-casein is the usual test substrate. In the absence of ATP, only oligopeptides shorter than five residues are hydrolyzed (such as succinyl-Leu-Tyr-|-NHMec, and Leu-Tyr-Leu-|-Tyr-Trp, in which cleavage of the -Tyr-|-Leu- and -Tyr-|-Trp bonds also occurs).. In terms of biological role, cleaves peptides in various proteins in a process that requires ATP hydrolysis. Has a chymotrypsin-like activity. Plays a major role in the degradation of misfolded proteins. This is ATP-dependent Clp protease proteolytic subunit from Shewanella sp. (strain ANA-3).